The sequence spans 103 residues: Phosphoribosyl-ATP pyrophosphatase (103 aa).

Belongs to the PRA-PH family.

It localises to the cytoplasm. It carries out the reaction 1-(5-phospho-beta-D-ribosyl)-ATP + H2O = 1-(5-phospho-beta-D-ribosyl)-5'-AMP + diphosphate + H(+). The protein operates within amino-acid biosynthesis; L-histidine biosynthesis; L-histidine from 5-phospho-alpha-D-ribose 1-diphosphate: step 2/9. This Listeria monocytogenes serotype 4b (strain CLIP80459) protein is Phosphoribosyl-ATP pyrophosphatase.